Consider the following 168-residue polypeptide: Bifunctional protein PyrR (168 aa).

Substrate contacts are provided by residues T36–G37, R77, D94–T102, and V151. Residues L90–T102 carry the PRPP-binding motif.

Belongs to the purine/pyrimidine phosphoribosyltransferase family. PyrR subfamily.

The catalysed reaction is UMP + diphosphate = 5-phospho-alpha-D-ribose 1-diphosphate + uracil. Regulates the transcription of the pyrimidine nucleotide (pyr) operon in response to exogenous pyrimidines. Functionally, also displays a weak uracil phosphoribosyltransferase activity which is not physiologically significant. This Pseudomonas fluorescens protein is Bifunctional protein PyrR.